The following is a 151-amino-acid chain: 3-hydroxyacyl-[acyl-carrier-protein] dehydratase FabZ (151 aa).

The active site involves histidine 49.

Belongs to the thioester dehydratase family. FabZ subfamily.

Its subcellular location is the cytoplasm. It catalyses the reaction a (3R)-hydroxyacyl-[ACP] = a (2E)-enoyl-[ACP] + H2O. Functionally, involved in unsaturated fatty acids biosynthesis. Catalyzes the dehydration of short chain beta-hydroxyacyl-ACPs and long chain saturated and unsaturated beta-hydroxyacyl-ACPs. This Bordetella petrii (strain ATCC BAA-461 / DSM 12804 / CCUG 43448) protein is 3-hydroxyacyl-[acyl-carrier-protein] dehydratase FabZ.